Consider the following 528-residue polypeptide: Calcium-dependent protein kinase 4 (528 aa).

The segment at 1–36 (MGQEVSSVNNTKNEHHKTNKKSLKGGNERHEMKESS) is disordered. The N-myristoyl glycine moiety is linked to residue Gly2. The segment covering 14–23 (EHHKTNKKSL) has biased composition (basic residues). The Protein kinase domain occupies 71–329 (KGIKILGKGS…RDALEHEWIK (259 aa)). ATP is bound by residues 76 to 84 (LGKGSFGEV) and Lys99. Residue Asp193 is the Proton acceptor of the active site. The short motif at 350 to 358 (NIRQFQSTQ) is the J domain autoinhibitory motif element. The segment at 350-386 (NIRQFQSTQKLAQAALLYMGSKLTTIDETKELTKIFK) is j domain. Positions 359 to 368 (KLAQAALLYM) match the J domain EF-hand interaction motif motif. 4 EF-hand domains span residues 376-411 (DETK…LLKL), 427-458 (EVDQ…RKLL), 459-494 (LSTE…SDVS), and 496-528 (ECWK…LCNY). Positions 389, 391, 393, 395, 400, 436, 438, 440, 442, 447, 472, 474, 476, 478, 483, 506, 508, 510, 512, and 517 each coordinate Ca(2+).

The protein belongs to the protein kinase superfamily. Ser/Thr protein kinase family. CDPK subfamily. As to quaternary structure, may interact with the pre-replication MCM complex prior male gametogenesis activation. It depends on Mg(2+) as a cofactor. Myristoylated; myristoylation may target it to different subcellular compartments. During male gametogenesis, myristoylation is required to initiate DNA replication but not for mitotic spindle assembly or axoneme activation. In terms of processing, not palmitoylated. Post-translationally, may be autophosphorylated on Thr-234 in vitro.

It is found in the cytoplasm. The protein resides in the cell membrane. It carries out the reaction L-seryl-[protein] + ATP = O-phospho-L-seryl-[protein] + ADP + H(+). It catalyses the reaction L-threonyl-[protein] + ATP = O-phospho-L-threonyl-[protein] + ADP + H(+). Its activity is regulated as follows. Activated by calcium. Upon calcium binding to the EF-hand domains, the C-terminus of the junction domain (J domain) undergoes a conformational change which results in the dissociation of the pseudo-substrate inhibitory motif from the catalytic domain. This, in turn, may facilitate the autophosphorylation of the activation loop at Thr-234, which leads to the kinase activation. Intracellular calcium increase is triggered by xanthurenic acid (XA), a small mosquito molecule that induces the differentiation of specialized transmission stages, the gametocytes, into male and female gametes. Activated by a decrease in temperature (20 degrees Celsius) and an increase in pH (7.6) occurring when the parasite is ingested by in the mosquito. Its function is as follows. Calcium-dependent protein kinase which acts as a sensor and effector of intracellular Ca(2+) levels probably in part downstream of cGMP-activated PKG kinase. Plays a central role in the host erythrocytes and hepatocytes infection cycles, sexual reproduction and mosquito transmission of the parasite. During the liver stage, involved in sporozoite motility and thus in sporozoite invasion of host hepatocytes, probably together with CDPK1 and CDPK5. Involved in merosome egress from host hepatocytes, probably together with CDPK5. During the asexual blood stage, involved in merozoite invasion of host erythrocytes and motility by stabilizing the inner membrane complex, a structure below the plasma membrane which acts as an anchor for the glidosome, an acto-myosin motor. Required for cell cycle progression in the male gametocyte. During male gametogenesis in the mosquito gut, required to initiate the first round of DNA replication, probably by facilitating the assembly of the pre-replicative MCM complex, to assemble the first mitotic spindle and, at the end of gametogenesis, to initiate axoneme motility, cytokinesis and subsequent exflagellation. For each of these steps, may phosphorylate SOC1, SOC2 and SOC3, respectively. Together with CDPK1, regulates ookinete gliding in the mosquito host midgut. This chain is Calcium-dependent protein kinase 4, found in Plasmodium falciparum (isolate 3D7).